A 353-amino-acid chain; its full sequence is Keratocan (353 aa).

The signal sequence occupies residues 1-21; that stretch reads MMTLKVCPSLLLLFLVHSVWT. One can recognise an LRRNT domain in the interval 34 to 72; the sequence is EHWSHYTFECPQECFCPPSFPNALYCDNKGLKEIPAIPA. 2 disulfide bridges follow: cysteine 43–cysteine 49 and cysteine 47–cysteine 59. LRR repeat units lie at residues 73–94, 97–118, 123–143, 144–165, 168–188, 194–214, 215–236, 239–262, 264–283, and 284–305; these read RIWY…PFVN, HLRW…SGVL, RLLY…PLPV, GLEQ…VFSN, NLTM…QSDT, SLMQ…SIPA, NTLQ…YFSA, KVTF…GFNV, SILD…PINA, and HLEH…QICP. Asparagine 94 carries an N-linked (GlcNAc...) (keratan sulfate) asparagine glycan. Residue asparagine 168 is glycosylated (N-linked (GlcNAc...) asparagine). N-linked (GlcNAc...) (keratan sulfate) asparagine glycans are attached at residues asparagine 223 and asparagine 261. Residue asparagine 299 is glycosylated (N-linked (GlcNAc...) asparagine). The cysteines at positions 304 and 344 are disulfide-linked.

The protein belongs to the small leucine-rich proteoglycan (SLRP) family. SLRP class II subfamily. In terms of processing, binds keratan sulfate chains.

It is found in the secreted. The protein localises to the extracellular space. The protein resides in the extracellular matrix. Its function is as follows. Plays an important role in generating and maintaining a transparent matrix within the corneal stroma. This is Keratocan (KERA) from Gallus gallus (Chicken).